The primary structure comprises 254 residues: 23S rRNA (guanosine-2'-O-)-methyltransferase RlmB (254 aa).

Residues Gly198, Ile218, and Leu227 each contribute to the S-adenosyl-L-methionine site.

It belongs to the class IV-like SAM-binding methyltransferase superfamily. RNA methyltransferase TrmH family. RlmB subfamily. In terms of assembly, homodimer.

It localises to the cytoplasm. The catalysed reaction is guanosine(2251) in 23S rRNA + S-adenosyl-L-methionine = 2'-O-methylguanosine(2251) in 23S rRNA + S-adenosyl-L-homocysteine + H(+). Functionally, specifically methylates the ribose of guanosine 2251 in 23S rRNA. In Blochmanniella floridana, this protein is 23S rRNA (guanosine-2'-O-)-methyltransferase RlmB.